Consider the following 486-residue polypeptide: Small ribosomal subunit protein uS4m (486 aa).

Residues 103-172 (KRLDFALFRA…AKKPSFQEAL (70 aa)) enclose the S4 RNA-binding domain.

This sequence belongs to the universal ribosomal protein uS4 family. Component of the mitochondrial small ribosomal subunit (mt-SSU). Mature yeast 74S mitochondrial ribosomes consist of a small (37S) and a large (54S) subunit. The 37S small subunit contains a 15S ribosomal RNA (15S mt-rRNA) and 34 different proteins. The 54S large subunit contains a 21S rRNA (21S mt-rRNA) and 46 different proteins. uS3m, uS4m and uS5m form the narrow entry site of the mRNA channel.

Its subcellular location is the mitochondrion. Its function is as follows. Component of the mitochondrial ribosome (mitoribosome), a dedicated translation machinery responsible for the synthesis of mitochondrial genome-encoded proteins, including at least some of the essential transmembrane subunits of the mitochondrial respiratory chain. The mitoribosomes are attached to the mitochondrial inner membrane and translation products are cotranslationally integrated into the membrane. In Saccharomyces cerevisiae (strain ATCC 204508 / S288c) (Baker's yeast), this protein is Small ribosomal subunit protein uS4m (NAM9).